The chain runs to 477 residues: Delayed-rectifier potassium channel regulatory subunit KCNS2 (477 aa).

Residues 1–184 (MTGQSLWDVS…LALDNPGYSV (184 aa)) are Cytoplasmic-facing. The chain crosses the membrane as a helical span at residues 185 to 206 (LSRVFSILSILVVMGSIITMCL). The Extracellular portion of the chain corresponds to 207-225 (NSLPDFQIPDSQGNPGEDP). Residues 226 to 248 (RFEIVEHFGIAWFTFELVARFAV) form a helical membrane-spanning segment. Topologically, residues 249-259 (APDFLKFFKNA) are cytoplasmic. A helical membrane pass occupies residues 260-280 (LNLIDLMSIVPFYITLVVNLV). At 281–290 (VESTPTLANL) the chain is on the extracellular side. Residues 291-311 (GRVAQVLRLMRIFRILKLARH) traverse the membrane as a helical; Voltage-sensor segment. Residues 312-326 (STGLRSLGATLKYSY) are Cytoplasmic-facing. A helical membrane pass occupies residues 327-348 (KEVGLLLLYLSVGISIFSVVAY). Over 349 to 361 (TIEKEENEGLATI) the chain is Extracellular. The segment at residues 362–373 (PACWWWATVSMT) is an intramembrane region (helical). Positions 374 to 379 (TVGYGD) match the Selectivity filter motif. The stretch at 374-381 (TVGYGDVV) is an intramembrane region. The Extracellular portion of the chain corresponds to 382-388 (PGTTAGK). A helical transmembrane segment spans residues 389-417 (LTASACILAGILVVVLPITLIFNKFSHFY). Over 418 to 477 (RRQKQLESAMRSCDFGDGMKEVPSVNLRDYYAHKVKSLMASLTNMSRSSPSELSLNDSLR) the chain is Cytoplasmic.

It belongs to the potassium channel family. S (TC 1.A.1.2) subfamily. Kv9.2/KCNS2 sub-subfamily. In terms of assembly, heterotetramer with KCNB1 and KCNB2. Does not form homomultimers.

It localises to the cell membrane. Its function is as follows. Potassium channel regulatory subunit that modulate the delayed rectifier voltage-gated potassium channel activity of KCNB1 and KCNB2 by altering their kinetics, expression levels, and shifting the half-inactivation potential to more polarized values. While it does not form functional channels on its own, it can form functional heterotetrameric channels with KCNB1 and KCNB2. Each regulatory subunit has unique regulatory properties that can lead to extensive inhibition, significant changes in kinetics, and/or substantial shifts in the voltage dependencies of the inactivation process. In Homo sapiens (Human), this protein is Delayed-rectifier potassium channel regulatory subunit KCNS2.